The sequence spans 113 residues: Ig heavy chain V-III region T957 (113 aa).

An Ig-like domain is found at Glu-1 to Val-113. Cys-22 and Cys-98 form a disulfide bridge.

This Mus musculus (Mouse) protein is Ig heavy chain V-III region T957.